The following is a 480-amino-acid chain: Membrane-bound lytic murein transglycosylase F (480 aa).

A signal peptide spans 1 to 15; it reads MKKLLFVLLTITLLA. The segment at 16–259 is non-LT domain; it reads SCQKVSVEQT…HLNEKYFAHV (244 aa). An LT domain region spans residues 260 to 480; sequence KRFDYVDTRA…QENLSGAQPQ (221 aa). Glutamate 304 is a catalytic residue.

This sequence in the N-terminal section; belongs to the bacterial solute-binding protein 3 family. It in the C-terminal section; belongs to the transglycosylase Slt family.

Its subcellular location is the cell outer membrane. It carries out the reaction Exolytic cleavage of the (1-&gt;4)-beta-glycosidic linkage between N-acetylmuramic acid (MurNAc) and N-acetylglucosamine (GlcNAc) residues in peptidoglycan, from either the reducing or the non-reducing ends of the peptidoglycan chains, with concomitant formation of a 1,6-anhydrobond in the MurNAc residue.. Functionally, murein-degrading enzyme that degrades murein glycan strands and insoluble, high-molecular weight murein sacculi, with the concomitant formation of a 1,6-anhydromuramoyl product. Lytic transglycosylases (LTs) play an integral role in the metabolism of the peptidoglycan (PG) sacculus. Their lytic action creates space within the PG sacculus to allow for its expansion as well as for the insertion of various structures such as secretion systems and flagella. This Shewanella sediminis (strain HAW-EB3) protein is Membrane-bound lytic murein transglycosylase F.